The following is a 498-amino-acid chain: Glycylpeptide N-tetradecanoyltransferase 2 (498 aa).

A disordered region spans residues 1-87 (MAEDSESAAS…QPPSKNSTIP (87 aa)). The span at 15–32 (ELDDQDTCGIDGDNEEET) shows a compositional bias: acidic residues. Serine 38 is modified (phosphoserine). A compositionally biased stretch (basic residues) spans 46 to 57 (KKKKKKQKRKKE). Polar residues predominate over residues 61 to 72 (SGGTKSDSASDS). Tetradecanoyl-CoA-binding residues include histidine 117, tryptophan 122, leucine 250, valine 252, serine 258, arginine 260, valine 261, and alanine 262.

Belongs to the NMT family.

Its subcellular location is the cytoplasm. It is found in the membrane. The catalysed reaction is N-terminal glycyl-[protein] + tetradecanoyl-CoA = N-tetradecanoylglycyl-[protein] + CoA + H(+). It carries out the reaction N-terminal glycyl-L-lysyl-[protein] + tetradecanoyl-CoA = N-terminal glycyl-(N(6)-tetradecanoyl)-L-lysyl-[protein] + CoA + H(+). Functionally, adds a myristoyl group to the N-terminal glycine residue of certain cellular and viral proteins. Also able to mediate N-terminal lysine myristoylation of proteins: catalyzes myristoylation of ARF6 on both 'Gly-2' and 'Lys-3'. Lysine myristoylation is required to maintain ARF6 on membranes during the GTPase cycle. The chain is Glycylpeptide N-tetradecanoyltransferase 2 (NMT2) from Bos taurus (Bovine).